The following is an 84-amino-acid chain: U2-theraphotoxin-Cg1b 2 (84 aa).

Positions 1 to 21 are cleaved as a signal peptide; sequence MKVSVLITLAVLGVMFLLTSA. A propeptide spanning residues 22–48 is cleaved from the precursor; that stretch reads EERGSDQMDSPAWLKSMEIIFQSEERE. 3 disulfide bridges follow: Cys-49–Cys-63, Cys-56–Cys-68, and Cys-62–Cys-76.

Belongs to the neurotoxin 10 (Hwtx-1) family. 06 (F4b) subfamily. As to expression, expressed by the venom gland.

It localises to the secreted. Its function is as follows. Probable ion channel inhibitor. The polypeptide is U2-theraphotoxin-Cg1b 2 (Chilobrachys guangxiensis (Chinese earth tiger tarantula)).